We begin with the raw amino-acid sequence, 89 residues long: Small ribosomal subunit protein uS14A (89 aa).

Positions 29-62 are disordered; that stretch reads AAGDRTALAKLPRDSNPNRLRLRDQTDGRPRGYM. Residues 49 to 58 show a composition bias toward basic and acidic residues; the sequence is RLRDQTDGRP.

Belongs to the universal ribosomal protein uS14 family. Part of the 30S ribosomal subunit. Contacts proteins S3 and S10.

In terms of biological role, binds 16S rRNA, required for the assembly of 30S particles and may also be responsible for determining the conformation of the 16S rRNA at the A site. In Enterococcus faecalis (strain ATCC 700802 / V583), this protein is Small ribosomal subunit protein uS14A.